A 653-amino-acid chain; its full sequence is Phospholipid-transporting ATPase VD (653 aa).

Over 1–375 (MACNLCYEAE…GHWCYTRLSN (375 aa)) the chain is Cytoplasmic. ATP is bound by residues Glu14, Phe56, Lys80, Arg124, Thr204, Gly205, Asp206, 259-266 (GLIITGKT), Arg293, and Lys299. Asp319 contacts Mg(2+). Positions 322 and 323 each coordinate ATP. Asp323 lines the Mg(2+) pocket. Residues 376–396 (MILYFFYKNVAYVNLLFWYQF) form a helical membrane-spanning segment. The Exoplasmic loop segment spans residues 397–407 (FCGFSGTSMTD). A helical transmembrane segment spans residues 408–428 (YWVLIFFNLLFTSAPPVIYGV). Residues 429–458 (LEKDVSAETLMQLPELYKSGQKSEAYLPHT) lie on the Cytoplasmic side of the membrane. The helical transmembrane segment at 459–480 (FWITLLDAFYQSLVCFFVPYFT) threads the bilayer. The Exoplasmic loop segment spans residues 481 to 487 (YQGSDID). Residues 488 to 510 (IFAFGNPLNTAALFIILLHLIIE) traverse the membrane as a helical segment. Residues 511–516 (SKSLTW) lie on the Cytoplasmic side of the membrane. The chain crosses the membrane as a helical span at residues 517 to 537 (IHMLVITGSILSYFLFAIVFG). Topologically, residues 538–555 (AMCVTCNPPSNPYWIMQE) are exoplasmic loop. A helical membrane pass occupies residues 556–580 (HVLDPVFYLVCILTTCIALLPRFVY). The Cytoplasmic portion of the chain corresponds to 581 to 653 (RGAGKMNQVT…AFEMARPCKD (73 aa)).

This sequence belongs to the cation transport ATPase (P-type) (TC 3.A.3) family. Type IV subfamily. In terms of assembly, component of a P4-ATPase flippase complex which consists of a catalytic alpha subunit ATP10A and an accessory beta subunit TMEM30A. Requires Mg(2+) as cofactor. In terms of processing, autophosphorylated at the conserved aspartate of the P-type ATPase signature sequence.

Its subcellular location is the cell membrane. It is found in the endoplasmic reticulum membrane. The enzyme catalyses ATP + H2O + phospholipidSide 1 = ADP + phosphate + phospholipidSide 2.. It catalyses the reaction a beta-D-glucosyl-(1&lt;-&gt;1')-N-acylsphing-4-enine(out) + ATP + H2O = a beta-D-glucosyl-(1&lt;-&gt;1')-N-acylsphing-4-enine(in) + ADP + phosphate + H(+). Functionally, catalytic component of a P4-ATPase flippase complex, which catalyzes the hydrolysis of ATP coupled to the transport of glucosylceramide (GlcCer) from the outer to the inner leaflet of the plasma membrane. This is Phospholipid-transporting ATPase VD (ATP10D) from Macaca fascicularis (Crab-eating macaque).